A 294-amino-acid polypeptide reads, in one-letter code: Bifunctional protein FolD (294 aa).

Residues 166–168 (GRS), Ser-191, and Ile-232 contribute to the NADP(+) site.

Belongs to the tetrahydrofolate dehydrogenase/cyclohydrolase family. As to quaternary structure, homodimer.

It carries out the reaction (6R)-5,10-methylene-5,6,7,8-tetrahydrofolate + NADP(+) = (6R)-5,10-methenyltetrahydrofolate + NADPH. The catalysed reaction is (6R)-5,10-methenyltetrahydrofolate + H2O = (6R)-10-formyltetrahydrofolate + H(+). It functions in the pathway one-carbon metabolism; tetrahydrofolate interconversion. Catalyzes the oxidation of 5,10-methylenetetrahydrofolate to 5,10-methenyltetrahydrofolate and then the hydrolysis of 5,10-methenyltetrahydrofolate to 10-formyltetrahydrofolate. The polypeptide is Bifunctional protein FolD (Bradyrhizobium sp. (strain ORS 278)).